Here is a 93-residue protein sequence, read N- to C-terminus: MKVTNVKIKKVDGDKFDRLRAYVDVTLDDCLVIHGLKLMQGEQGMFVAMPSRKMRNEEFKDIVHPICPELRNDITKVVQEKYFALDQEQEAVI.

Belongs to the SpoVG family.

In terms of biological role, could be involved in septation. The protein is Putative septation protein SpoVG of Fusobacterium nucleatum subsp. nucleatum (strain ATCC 25586 / DSM 15643 / BCRC 10681 / CIP 101130 / JCM 8532 / KCTC 2640 / LMG 13131 / VPI 4355).